The primary structure comprises 218 residues: Riboflavin kinase (218 aa).

An N-terminal signal peptide occupies residues 1-19 (MFTWTIYVSLLLVLAGTFL). Threonine 72 and asparagine 74 together coordinate Mg(2+). Glutamate 155 acts as the Nucleophile in catalysis.

It belongs to the flavokinase family. It depends on Zn(2+) as a cofactor. Mg(2+) is required as a cofactor.

Its subcellular location is the microsome. The protein resides in the mitochondrion inner membrane. It localises to the endoplasmic reticulum. The enzyme catalyses riboflavin + ATP = FMN + ADP + H(+). It functions in the pathway cofactor biosynthesis; FMN biosynthesis; FMN from riboflavin (ATP route): step 1/1. Functionally, catalyzes the phosphorylation of riboflavin (vitamin B2) to form flavin mononucleotide (FMN) coenzyme. This Saccharomyces cerevisiae (strain ATCC 204508 / S288c) (Baker's yeast) protein is Riboflavin kinase (FMN1).